Reading from the N-terminus, the 252-residue chain is Nuclease C1 (252 aa).

His-87 serves as the catalytic Proton acceptor. Asn-119 serves as a coordination point for Mg(2+).

This sequence belongs to the DNA/RNA non-specific endonuclease family. Requires Mg(2+) as cofactor. The cofactor is Mn(2+).

It is found in the secreted. This enzyme has both RNase and DNase activity. The polypeptide is Nuclease C1 (NUC1CE) (Cunninghamella echinulata var. echinulata).